A 129-amino-acid chain; its full sequence is Small ribosomal subunit protein uS11 (129 aa).

Belongs to the universal ribosomal protein uS11 family. Part of the 30S ribosomal subunit. Interacts with proteins S7 and S18. Binds to IF-3.

Its function is as follows. Located on the platform of the 30S subunit, it bridges several disparate RNA helices of the 16S rRNA. Forms part of the Shine-Dalgarno cleft in the 70S ribosome. The polypeptide is Small ribosomal subunit protein uS11 (Methylobacterium sp. (strain 4-46)).